The chain runs to 437 residues: GTPase Obg (437 aa).

Positions 2-160 constitute an Obg domain; sequence SLFLDTARIE…KILLLELRVL (159 aa). Residues 161–338 form the OBG-type G domain; sequence ADVGLVGFPS…LLARTSELLA (178 aa). GTP contacts are provided by residues 167-174, 192-196, 214-217, 284-287, and 319-321; these read GFPSVGKS, FTTIT, DMPG, NKMD, and SGL. Residues S174 and T194 each coordinate Mg(2+). The OCT domain occupies 359–437; the sequence is GFEDEEKPFK…IQKFEFEFVD (79 aa).

Belongs to the TRAFAC class OBG-HflX-like GTPase superfamily. OBG GTPase family. As to quaternary structure, monomer. It depends on Mg(2+) as a cofactor.

The protein localises to the cytoplasm. In terms of biological role, an essential GTPase which binds GTP, GDP and possibly (p)ppGpp with moderate affinity, with high nucleotide exchange rates and a fairly low GTP hydrolysis rate. Plays a role in control of the cell cycle, stress response, ribosome biogenesis and in those bacteria that undergo differentiation, in morphogenesis control. The chain is GTPase Obg from Lactococcus lactis subsp. cremoris (strain SK11).